The chain runs to 390 residues: Alanine racemase (390 aa).

Lys-37 functions as the Proton acceptor; specific for D-alanine in the catalytic mechanism. N6-(pyridoxal phosphate)lysine is present on Lys-37. Position 135 (Arg-135) interacts with substrate. Catalysis depends on Tyr-274, which acts as the Proton acceptor; specific for L-alanine. Substrate is bound at residue Met-322.

The protein belongs to the alanine racemase family. The cofactor is pyridoxal 5'-phosphate.

It carries out the reaction L-alanine = D-alanine. Its pathway is amino-acid biosynthesis; D-alanine biosynthesis; D-alanine from L-alanine: step 1/1. In terms of biological role, catalyzes the interconversion of L-alanine and D-alanine. May also act on other amino acids. This Desulfosudis oleivorans (strain DSM 6200 / JCM 39069 / Hxd3) (Desulfococcus oleovorans) protein is Alanine racemase (alr).